The primary structure comprises 490 residues: Subtilisin-like protease 8 (490 aa).

Residues 1-26 form the signal peptide; the sequence is MKGLLSLSVLPVLAYASPMIVDSIHQ. The propeptide occupies 27-134; the sequence is NAAPILSSTN…YIERDSEVHT (108 aa). One can recognise an Inhibitor I9 domain in the interval 43–134; it reads SYIVVFKKGV…YIERDSEVHT (92 aa). Positions 144 to 450 constitute a Peptidase S8 domain; that stretch reads PWGLARISHR…GGSDDYKKII (307 aa). Active-site charge relay system residues include D180 and H212. Residue N282 is glycosylated (N-linked (GlcNAc...) asparagine). S378 serves as the catalytic Charge relay system. An N-linked (GlcNAc...) asparagine glycan is attached at N456.

This sequence belongs to the peptidase S8 family.

Its subcellular location is the secreted. In terms of biological role, secreted subtilisin-like serine protease with keratinolytic activity that contributes to pathogenicity. The protein is Subtilisin-like protease 8 (SUB8) of Trichophyton verrucosum (strain HKI 0517).